The following is a 178-amino-acid chain: Large ribosomal subunit protein uL6 (178 aa).

It belongs to the universal ribosomal protein uL6 family. As to quaternary structure, part of the 50S ribosomal subunit.

In terms of biological role, this protein binds to the 23S rRNA, and is important in its secondary structure. It is located near the subunit interface in the base of the L7/L12 stalk, and near the tRNA binding site of the peptidyltransferase center. The chain is Large ribosomal subunit protein uL6 from Francisella tularensis subsp. tularensis (strain FSC 198).